The primary structure comprises 393 residues: Yellow-related salivary protein SP03B (393 aa).

The first 18 residues, 1–18 (MKIFLCLIAVVFLQGVVG), serve as a signal peptide directing secretion. The N-linked (GlcNAc...) asparagine glycan is linked to Asn29.

The protein belongs to the major royal jelly protein family. In terms of tissue distribution, female salivary gland (at protein level).

It is found in the secreted. Probably modulates blood feeding of sand flies on vertebrate species by binding and sequestering different mediators involved in the host response. Binds biogenic amines. Binds serotonin with high affinity. Poorly binds histamine. Does not bind dopamine, noradrenaline, adrenaline and octopamine. In Phlebotomus perniciosus (Phlebotomine sand fly), this protein is Yellow-related salivary protein SP03B.